Here is a 287-residue protein sequence, read N- to C-terminus: MEGIFYALIPMFTWGSIGFVSNKIGGKPSQQTLGMTFGALLFSLAVWLIVRPEMTLQLWLFGILGGFIWSIGQTGQFHAMQYMGVSVANPLSSGSQLVLGSLIGVLVFHEWTRPMQFVVGSLALLLLIVGFYFSSKQDDANAQVNHLHNFSKGFRALTYSTIGYVMYAVLFNNIMKFEVLSVILPMAVGMVLGAITFMSFKISIDQYVIKNSVVGLLWGIGNIFMLLAASKAGLAIAFSFSQLGAIISIVGGILFLGETKTKKEMRWVVTGIICFIVGAILLGVVKS.

10 consecutive transmembrane segments (helical) span residues 4–26 (IFYALIPMFTWGSIGFVSNKIGG), 33–50 (LGMTFGALLFSLAVWLIV), 55–72 (TLQLWLFGILGGFIWSIG), 85–107 (VSVANPLSSGSQLVLGSLIGVLV), 117–134 (FVVGSLALLLLIVGFYFS), 154–171 (FRALTYSTIGYVMYAVLF), 181–200 (SVILPMAVGMVLGAITFMSF), 207–229 (YVIKNSVVGLLWGIGNIFMLLAA), 234–256 (LAIAFSFSQLGAIISIVGGILFL), and 268–285 (VVTGIICFIVGAILLGVV).

This sequence belongs to the GRP transporter (TC 2.A.7.5) family.

It is found in the cell membrane. This is Putative sugar uptake protein spyM18_2243 from Streptococcus pyogenes serotype M18 (strain MGAS8232).